The chain runs to 566 residues: Putative ABC transporter ATP-binding protein BT9727_2424 (566 aa).

ABC transporter domains lie at 5–246 and 300–533; these read ISFE…GLRE and LKVE…ANLK. Residues 39 to 46 and 333 to 340 each bind ATP; these read GRSGSGKS and GHNGAGKS.

Belongs to the ABC transporter superfamily.

It is found in the cell membrane. Probably part of an ABC transporter complex. Responsible for energy coupling to the transport system. The polypeptide is Putative ABC transporter ATP-binding protein BT9727_2424 (Bacillus thuringiensis subsp. konkukian (strain 97-27)).